Here is a 330-residue protein sequence, read N- to C-terminus: Adenylate isopentenyltransferase 8, chloroplastic (330 aa).

The transit peptide at 1 to 35 (MQNLTSTFVSPSMIPITSPRLRLPPPRSVVPMTTV) directs the protein to the chloroplast. An ATP-binding site is contributed by 50 to 57 (GATGSGKS).

Belongs to the IPP transferase family. Expressed in roots and in immature seeds with highest expression in the chalazal endosperm.

It localises to the plastid. It is found in the chloroplast. The enzyme catalyses dimethylallyl diphosphate + ADP = N(6)-(dimethylallyl)adenosine 5'-diphosphate + diphosphate. It catalyses the reaction dimethylallyl diphosphate + ATP = N(6)-(dimethylallyl)adenosine 5'-triphosphate + diphosphate. Involved in cytokinin biosynthesis. Catalyzes the transfer of an isopentenyl group from dimethylallyl diphosphate (DMAPP) to ATP and ADP. The polypeptide is Adenylate isopentenyltransferase 8, chloroplastic (IPT8) (Arabidopsis thaliana (Mouse-ear cress)).